Here is a 448-residue protein sequence, read N- to C-terminus: Homogentisate 1,2-dioxygenase (448 aa).

His-303 (proton acceptor) is an active-site residue. Fe cation-binding residues include His-346 and Glu-352. Homogentisate is bound by residues Tyr-361 and His-382. A Fe cation-binding site is contributed by His-382.

Belongs to the homogentisate dioxygenase family. As to quaternary structure, hexamer; dimer of trimers. Fe cation serves as cofactor.

The enzyme catalyses homogentisate + O2 = 4-maleylacetoacetate + H(+). The protein operates within amino-acid degradation; L-phenylalanine degradation; acetoacetate and fumarate from L-phenylalanine: step 4/6. Involved in the catabolism of homogentisate (2,5-dihydroxyphenylacetate or 2,5-OH-PhAc), a central intermediate in the degradation of phenylalanine and tyrosine. Catalyzes the oxidative ring cleavage of the aromatic ring of homogentisate to yield maleylacetoacetate. The protein is Homogentisate 1,2-dioxygenase of Rhodopseudomonas palustris (strain ATCC BAA-98 / CGA009).